Here is a 128-residue protein sequence, read N- to C-terminus: MLQNLALSFPFITRFFQKQMLGSQNSSGKTPGFNEAEGITSNIFQIAGGISLLVILLLIIGFLSCLLGGIFLHKHKYAEVGSPAHAKTKNLFVAFFVVGSLLLLVAVVMLIAFGVLDASLPLPKENNS.

A run of 2 helical transmembrane segments spans residues 52–72 (LLVILLLIIGFLSCLLGGIFL) and 91–111 (LFVAFFVVGSLLLLVAVVMLI).

It is found in the cell membrane. This is an uncharacterized protein from Mycoplasma pneumoniae (strain ATCC 29342 / M129 / Subtype 1) (Mycoplasmoides pneumoniae).